The following is a 267-amino-acid chain: Undecaprenyl-diphosphatase (267 aa).

8 helical membrane-spanning segments follow: residues 1-21 (MTYFEAFFLALLQGFTEFLPI), 39-59 (QGLAFDVAVHVGTLAAVVIYF), 83-103 (SNLAWLIVLATIPAALFGLLF), 111-131 (LRSAWVIAATTIVFGLLLWWV), 149-169 (ALFLGIAQAMAMIPGTSRSGI), 189-209 (FLMSIPIITLAGSYLGLKLAM), 218-238 (LLSTGVIVSFISAYICIHFFL), and 246-266 (MMPFVIYRILLGSSLLVWLAL).

The protein belongs to the UppP family.

The protein resides in the cell inner membrane. The enzyme catalyses di-trans,octa-cis-undecaprenyl diphosphate + H2O = di-trans,octa-cis-undecaprenyl phosphate + phosphate + H(+). Its function is as follows. Catalyzes the dephosphorylation of undecaprenyl diphosphate (UPP). Confers resistance to bacitracin. The protein is Undecaprenyl-diphosphatase of Aliivibrio fischeri (strain MJ11) (Vibrio fischeri).